We begin with the raw amino-acid sequence, 533 residues long: Nitrogen fixation protein AnfA (533 aa).

The segment at 33–193 is a domain; it reads ILYKISQIIT…PLVELYLIEN (161 aa). In terms of domain architecture, GAF spans 46–186; sequence DLADALSIVL…MIATMIAPLV (141 aa). A Sigma-54 factor interaction domain is found at 219–448; that stretch reads IIGNSKPMQE…LENVMERAVI (230 aa). ATP-binding positions include 247–254 and 310–319; these read GESGVGKE and ADGGTIFLDE. Positions 501–520 form a DNA-binding region, H-T-H motif; the sequence is IGEAAKELGLARRMLGVRME.

Its function is as follows. AnfA is essential for nitrogen fixation under Mo- and V-deficient conditions. It is required for the regulation of nitrogenase 3 transcription. Interacts with sigma-54. The chain is Nitrogen fixation protein AnfA (anfA) from Azotobacter vinelandii.